Reading from the N-terminus, the 464-residue chain is tRNA-2-methylthio-N(6)-dimethylallyladenosine synthase (464 aa).

A disordered region spans residues 1 to 25 (MSDLVPLSRKPAPAAGDPAPSPAAP). An MTTase N-terminal domain is found at 27–142 (RKVYVHTFGC…LPEMVERARG (116 aa)). [4Fe-4S] cluster contacts are provided by cysteine 36, cysteine 72, cysteine 105, cysteine 180, cysteine 184, and cysteine 187. The 233-residue stretch at 166-398 (ARGRATAFVT…LAAQRRIAGE (233 aa)) folds into the Radical SAM core domain. Residues 401–464 (AAELGKVVEV…GGSSLSGTLA (64 aa)) form the TRAM domain.

It belongs to the methylthiotransferase family. MiaB subfamily. In terms of assembly, monomer. Requires [4Fe-4S] cluster as cofactor.

Its subcellular location is the cytoplasm. It catalyses the reaction N(6)-dimethylallyladenosine(37) in tRNA + (sulfur carrier)-SH + AH2 + 2 S-adenosyl-L-methionine = 2-methylsulfanyl-N(6)-dimethylallyladenosine(37) in tRNA + (sulfur carrier)-H + 5'-deoxyadenosine + L-methionine + A + S-adenosyl-L-homocysteine + 2 H(+). Catalyzes the methylthiolation of N6-(dimethylallyl)adenosine (i(6)A), leading to the formation of 2-methylthio-N6-(dimethylallyl)adenosine (ms(2)i(6)A) at position 37 in tRNAs that read codons beginning with uridine. The sequence is that of tRNA-2-methylthio-N(6)-dimethylallyladenosine synthase from Anaeromyxobacter dehalogenans (strain 2CP-C).